We begin with the raw amino-acid sequence, 124 residues long: Small ribosomal subunit protein uS10 (124 aa).

It belongs to the universal ribosomal protein uS10 family.

The polypeptide is Small ribosomal subunit protein uS10 (rps20) (Dictyostelium discoideum (Social amoeba)).